The chain runs to 323 residues: Tetraacyldisaccharide 4'-kinase (323 aa).

Residue 56–63 (TVGGVGKT) participates in ATP binding.

This sequence belongs to the LpxK family.

It carries out the reaction a lipid A disaccharide + ATP = a lipid IVA + ADP + H(+). The protein operates within glycolipid biosynthesis; lipid IV(A) biosynthesis; lipid IV(A) from (3R)-3-hydroxytetradecanoyl-[acyl-carrier-protein] and UDP-N-acetyl-alpha-D-glucosamine: step 6/6. Functionally, transfers the gamma-phosphate of ATP to the 4'-position of a tetraacyldisaccharide 1-phosphate intermediate (termed DS-1-P) to form tetraacyldisaccharide 1,4'-bis-phosphate (lipid IVA). The sequence is that of Tetraacyldisaccharide 4'-kinase from Legionella pneumophila (strain Lens).